The following is a 389-amino-acid chain: Succinate--CoA ligase [ADP-forming] subunit beta (389 aa).

Positions 9–236 (KELFAKHGVP…RDATDPLELK (228 aa)) constitute an ATP-grasp domain. ATP contacts are provided by residues Lys45, 52 to 54 (GRG), Ser94, and Glu99. Residues Asn191 and Asp205 each contribute to the Mg(2+) site. Substrate contacts are provided by residues Asn256 and 318-320 (GIT).

This sequence belongs to the succinate/malate CoA ligase beta subunit family. As to quaternary structure, heterotetramer of two alpha and two beta subunits. It depends on Mg(2+) as a cofactor.

The catalysed reaction is succinate + ATP + CoA = succinyl-CoA + ADP + phosphate. It catalyses the reaction GTP + succinate + CoA = succinyl-CoA + GDP + phosphate. Its pathway is carbohydrate metabolism; tricarboxylic acid cycle; succinate from succinyl-CoA (ligase route): step 1/1. In terms of biological role, succinyl-CoA synthetase functions in the citric acid cycle (TCA), coupling the hydrolysis of succinyl-CoA to the synthesis of either ATP or GTP and thus represents the only step of substrate-level phosphorylation in the TCA. The beta subunit provides nucleotide specificity of the enzyme and binds the substrate succinate, while the binding sites for coenzyme A and phosphate are found in the alpha subunit. In Rhodococcus erythropolis (strain PR4 / NBRC 100887), this protein is Succinate--CoA ligase [ADP-forming] subunit beta.